Consider the following 481-residue polypeptide: MITIERVLEILKADANFRHIKQNDQTDSTWTDVQFDALSYDSRTVSPMTLFFAKGLAFKKEFLEKAIEAGLAFYVSEINYEVGIPAIIVHDIKQAMSLIAMEFHGHPQKQLKLLAFTGTKGKTTAAYFAFNILKQSKKPAMLSTMNTTLDGKTFFKSTLTTPESLDLFAMMAEAVKNGMTHLIMEVSSQAYLVKRVYGLTFDVGVFLNISPDHIGPIEHPTFEDYFYHKRLLMDNSRAVIVNAGMDHFEVVKEQVSSKDHDFYGPTSENQISQSAGFDFTATGKLAGHYDIQLIGGFNQENAIAAGLACLRLGASLEDIHTGIAQTNVPGRMEVLTQQNGAKVFVDYAHNGDSVKKLIDVVLEHQTGKVFLILGAPGNKGESRRKDFGLLLNDYPQIEVILTADDPNREDPAAIAEQIRAHMTRTSNFILDREEAIRTAMSQTSSPKDAVIIAGKGADAYQIVNGEKAAYDGDLEVAKQYL.

Serine 42 provides a ligand contact to UDP-N-acetyl-alpha-D-muramoyl-L-alanyl-D-glutamate. Residue 118-124 (GTKGKTT) coordinates ATP. UDP-N-acetyl-alpha-D-muramoyl-L-alanyl-D-glutamate is bound by residues 160 to 161 (TT), serine 187, and arginine 195. At lysine 229 the chain carries N6-carboxylysine. The short motif at 404–407 (DDPN) is the L-lysine recognition motif element.

The protein belongs to the MurCDEF family. MurE subfamily. Carboxylation is probably crucial for Mg(2+) binding and, consequently, for the gamma-phosphate positioning of ATP.

It localises to the cytoplasm. It carries out the reaction UDP-N-acetyl-alpha-D-muramoyl-L-alanyl-D-glutamate + L-lysine + ATP = UDP-N-acetyl-alpha-D-muramoyl-L-alanyl-gamma-D-glutamyl-L-lysine + ADP + phosphate + H(+). It participates in cell wall biogenesis; peptidoglycan biosynthesis. Its function is as follows. Catalyzes the addition of L-lysine to the nucleotide precursor UDP-N-acetylmuramoyl-L-alanyl-D-glutamate (UMAG) in the biosynthesis of bacterial cell-wall peptidoglycan. The sequence is that of UDP-N-acetylmuramoyl-L-alanyl-D-glutamate--L-lysine ligase from Streptococcus suis (strain 98HAH33).